A 174-amino-acid chain; its full sequence is Putative FAS1 domain-containing protein 096L (174 aa).

The 136-residue stretch at 36–171 (PDTLWSKLNE…GIIHLMEEVY (136 aa)) folds into the FAS1 domain.

The protein is Putative FAS1 domain-containing protein 096L of Acheta domesticus (House cricket).